A 224-amino-acid chain; its full sequence is Charged multivesicular body protein 3 (224 aa).

Residue glycine 2 is the site of N-myristoyl glycine attachment. Residues 2 to 113 (GLFGKTQEKP…LQKSTEVMKA (112 aa)) are intramolecular interaction with C-terminus. Positions 22–54 (KIRKEMRVVDRQIRDIQREEEKVKRSVKDAAKK) form a coiled coil. 2 important for autoinhibitory function regions span residues 59–64 (VCVVLA) and 168–169 (IL). Positions 149–224 (ESMDDQEEME…MQSRLATLRS (76 aa)) form a coiled coil. Residues 151–222 (MDDQEEMEEA…EAMQSRLATL (72 aa)) form an intramolecular interaction with N-terminus region. Residues 151-224 (MDDQEEMEEA…MQSRLATLRS (74 aa)) are interaction with VPS4A. Lysine 179 participates in a covalent cross-link: Glycyl lysine isopeptide (Lys-Gly) (interchain with G-Cter in ubiquitin). The interval 180–224 (APSKVTDALPEPEPAGAMAASEEGEEEEDEEDLEAMQSRLATLRS) is disordered. 3 interaction with STAMBP regions span residues 196–224 (AMAA…TLRS), 205–209 (EEEDE), and 223–224 (RS). At serine 200 the chain carries Phosphoserine. The MIT-interacting motif motif lies at 201–213 (EEGEEEEDEEDLE). Residues 201–213 (EEGEEEEDEEDLE) show a composition bias toward acidic residues.

Belongs to the SNF7 family. In terms of assembly, probable core component of the endosomal sorting required for transport complex III (ESCRT-III). ESCRT-III components are thought to multimerize to form a flat lattice on the perimeter membrane of the endosome. Several assembly forms of ESCRT-III may exist that interact and act sequentially. Forms a metastable monomer in solution; its core structure (without part of the putative autoinhibitory C-terminal acidic region) oligomerizes into a flat lattice via two different dimerization interfaces. In vitro, heteromerizes with CHMP2A (but not CHMP4) to form helical tubular structures that expose membrane-interacting sites on the outside whereas VPS4B can associate on the inside of the tubule. May interact with IGFBP7; the relevance of such interaction however remains unclear. Interacts with CHMP2A. Interacts with CHMP4A; the interaction requires the release of CHMP4A autoinhibition. Interacts with VPS4A. Interacts with STAMBP; the interaction appears to relieve the autoinhibition of CHMP3. Interacts with VTA1. As to expression, expressed in lung, testis, heart, spleen, skeletal muscle, kidney, liver and brain.

It is found in the cytoplasm. The protein localises to the cytosol. It localises to the membrane. Its subcellular location is the endosome. The protein resides in the late endosome membrane. Its function is as follows. Probable core component of the endosomal sorting required for transport complex III (ESCRT-III) which is involved in multivesicular bodies (MVBs) formation and sorting of endosomal cargo proteins into MVBs. MVBs contain intraluminal vesicles (ILVs) that are generated by invagination and scission from the limiting membrane of the endosome and mostly are delivered to lysosomes enabling degradation of membrane proteins, such as stimulated growth factor receptors, lysosomal enzymes and lipids. The MVB pathway appears to require the sequential function of ESCRT-O, -I,-II and -III complexes. ESCRT-III proteins mostly dissociate from the invaginating membrane before the ILV is released. The ESCRT machinery also functions in topologically equivalent membrane fission events, such as the terminal stages of cytokinesis. ESCRT-III proteins are believed to mediate the necessary vesicle extrusion and/or membrane fission activities, possibly in conjunction with the AAA ATPase VPS4. Selectively binds to phosphatidylinositol 3,5-bisphosphate PtdIns(3,5)P2 and PtdIns(3,4)P2 in preference to other phosphoinositides tested. Involved in late stages of cytokinesis. Plays a role in endosomal sorting/trafficking of EGF receptor. This Mus musculus (Mouse) protein is Charged multivesicular body protein 3 (Chmp3).